Here is a 259-residue protein sequence, read N- to C-terminus: Proteasome subunit beta type-4 (259 aa).

It belongs to the peptidase T1B family. In terms of assembly, the 26S proteasome consists of a 20S proteasome core and two 19S regulatory subunits. The 20S proteasome core is composed of 28 subunits that are arranged in four stacked rings, resulting in a barrel-shaped structure. The two end rings are each formed by seven alpha subunits, and the two central rings are each formed by seven beta subunits. The catalytic chamber with the active sites is on the inside of the barrel.

It is found in the cytoplasm. Its subcellular location is the nucleus. In terms of biological role, non-catalytic component of the proteasome, a multicatalytic proteinase complex which is characterized by its ability to cleave peptides with Arg, Phe, Tyr, Leu, and Glu adjacent to the leaving group at neutral or slightly basic pH. The proteasome has an ATP-dependent proteolytic activity. The sequence is that of Proteasome subunit beta type-4 (psmB4-1) from Dictyostelium discoideum (Social amoeba).